A 393-amino-acid chain; its full sequence is S-adenosylmethionine synthase (393 aa).

Histidine 16 is an ATP binding site. Aspartate 18 contributes to the Mg(2+) binding site. Residue glutamate 44 participates in K(+) binding. Glutamate 57 and glutamine 100 together coordinate L-methionine. A flexible loop region spans residues 100–110 (QSPDIVMGVDG). Residues 165–167 (DAK), 231–232 (RF), aspartate 240, 246–247 (RK), and lysine 267 each bind ATP. Aspartate 240 is a binding site for L-methionine. L-methionine is bound at residue lysine 271.

It belongs to the AdoMet synthase family. As to quaternary structure, homotetramer; dimer of dimers. The cofactor is Mg(2+). K(+) serves as cofactor.

Its subcellular location is the cytoplasm. It carries out the reaction L-methionine + ATP + H2O = S-adenosyl-L-methionine + phosphate + diphosphate. The protein operates within amino-acid biosynthesis; S-adenosyl-L-methionine biosynthesis; S-adenosyl-L-methionine from L-methionine: step 1/1. Its function is as follows. Catalyzes the formation of S-adenosylmethionine (AdoMet) from methionine and ATP. The overall synthetic reaction is composed of two sequential steps, AdoMet formation and the subsequent tripolyphosphate hydrolysis which occurs prior to release of AdoMet from the enzyme. This Coxiella burnetii (strain CbuG_Q212) (Coxiella burnetii (strain Q212)) protein is S-adenosylmethionine synthase.